The chain runs to 201 residues: Holliday junction resolvase RecU (201 aa).

Thr-85, Asp-87, Asp-100, and Gln-119 together coordinate Mg(2+).

Belongs to the RecU family. Requires Mg(2+) as cofactor.

It is found in the cytoplasm. The catalysed reaction is Endonucleolytic cleavage at a junction such as a reciprocal single-stranded crossover between two homologous DNA duplexes (Holliday junction).. Endonuclease that resolves Holliday junction intermediates in genetic recombination. Cleaves mobile four-strand junctions by introducing symmetrical nicks in paired strands. Promotes annealing of linear ssDNA with homologous dsDNA. Required for DNA repair, homologous recombination and chromosome segregation. The polypeptide is Holliday junction resolvase RecU (Pediococcus pentosaceus (strain ATCC 25745 / CCUG 21536 / LMG 10740 / 183-1w)).